The chain runs to 344 residues: Cell division protein ZipA (344 aa).

At Met-1–Leu-6 the chain is on the periplasmic side. Residues Val-7–Ile-27 form a helical membrane-spanning segment. Topologically, residues Arg-28 to Ala-344 are cytoplasmic. 2 disordered regions span residues Val-75–Lys-94 and Gln-108–Gln-139.

Belongs to the ZipA family. Interacts with FtsZ via their C-terminal domains.

It localises to the cell inner membrane. In terms of biological role, essential cell division protein that stabilizes the FtsZ protofilaments by cross-linking them and that serves as a cytoplasmic membrane anchor for the Z ring. Also required for the recruitment to the septal ring of downstream cell division proteins. The chain is Cell division protein ZipA from Shewanella oneidensis (strain ATCC 700550 / JCM 31522 / CIP 106686 / LMG 19005 / NCIMB 14063 / MR-1).